Here is a 650-residue protein sequence, read N- to C-terminus: DNA gyrase subunit B (650 aa).

One can recognise a Toprim domain in the interval 429–543; it reads NELFIVEGDS…AGYVYIAQPP (115 aa). Glutamate 435, aspartate 508, and aspartate 510 together coordinate Mg(2+).

This sequence belongs to the type II topoisomerase GyrB family. Heterotetramer, composed of two GyrA and two GyrB chains. In the heterotetramer, GyrA contains the active site tyrosine that forms a transient covalent intermediate with DNA, while GyrB binds cofactors and catalyzes ATP hydrolysis. The cofactor is Mg(2+). Requires Mn(2+) as cofactor. It depends on Ca(2+) as a cofactor.

It localises to the cytoplasm. The enzyme catalyses ATP-dependent breakage, passage and rejoining of double-stranded DNA.. In terms of biological role, a type II topoisomerase that negatively supercoils closed circular double-stranded (ds) DNA in an ATP-dependent manner to modulate DNA topology and maintain chromosomes in an underwound state. Negative supercoiling favors strand separation, and DNA replication, transcription, recombination and repair, all of which involve strand separation. Also able to catalyze the interconversion of other topological isomers of dsDNA rings, including catenanes and knotted rings. Type II topoisomerases break and join 2 DNA strands simultaneously in an ATP-dependent manner. The chain is DNA gyrase subunit B from Streptococcus pyogenes serotype M18 (strain MGAS8232).